The chain runs to 92 residues: Small ribosomal subunit protein uS19c (92 aa).

It belongs to the universal ribosomal protein uS19 family.

The protein resides in the plastid. The protein localises to the chloroplast. Functionally, protein S19 forms a complex with S13 that binds strongly to the 16S ribosomal RNA. This is Small ribosomal subunit protein uS19c from Vitis vinifera (Grape).